The sequence spans 488 residues: Acetyl-coenzyme A carboxylase carboxyl transferase subunit beta, chloroplastic (488 aa).

A CoA carboxyltransferase N-terminal domain is found at 221–488 (LWIQCDNCYA…FFPLNKNEIK (268 aa)). Zn(2+) contacts are provided by Cys225, Cys228, Cys244, and Cys247. Residues 225–247 (CDNCYALIYKKALKLKLNVCEQC) form a C4-type zinc finger.

Belongs to the AccD/PCCB family. As to quaternary structure, acetyl-CoA carboxylase is a heterohexamer composed of biotin carboxyl carrier protein, biotin carboxylase and 2 subunits each of ACCase subunit alpha and ACCase plastid-coded subunit beta (accD). Zn(2+) is required as a cofactor.

The protein resides in the plastid. It is found in the chloroplast stroma. The catalysed reaction is N(6)-carboxybiotinyl-L-lysyl-[protein] + acetyl-CoA = N(6)-biotinyl-L-lysyl-[protein] + malonyl-CoA. It functions in the pathway lipid metabolism; malonyl-CoA biosynthesis; malonyl-CoA from acetyl-CoA: step 1/1. In terms of biological role, component of the acetyl coenzyme A carboxylase (ACC) complex. Biotin carboxylase (BC) catalyzes the carboxylation of biotin on its carrier protein (BCCP) and then the CO(2) group is transferred by the transcarboxylase to acetyl-CoA to form malonyl-CoA. This is Acetyl-coenzyme A carboxylase carboxyl transferase subunit beta, chloroplastic from Aethionema grandiflorum (Persian stone-cress).